We begin with the raw amino-acid sequence, 144 residues long: MAKKIIGYIKLQIPAGKANPSPPVGPALGQRGLNIMEFCKAFNAATQGMEPGLPIPVVITAFADKSFTFVMKTPPASILLKKAAGLQKGSSNPLTNKVGKLTRAQLEEIAKTKEPDLTAADLDAAVRTIAGSARSMGLDVEGVV.

It belongs to the universal ribosomal protein uL11 family. As to quaternary structure, part of the ribosomal stalk of the 50S ribosomal subunit. Interacts with L10 and the large rRNA to form the base of the stalk. L10 forms an elongated spine to which L12 dimers bind in a sequential fashion forming a multimeric L10(L12)X complex. One or more lysine residues are methylated.

Forms part of the ribosomal stalk which helps the ribosome interact with GTP-bound translation factors. This is Large ribosomal subunit protein uL11 from Neisseria meningitidis serogroup A / serotype 4A (strain DSM 15465 / Z2491).